Consider the following 438-residue polypeptide: Indole diterpene prenyltransferase paxD (438 aa).

80 to 81 contributes to the L-tryptophan binding site; sequence FM. Residues arginine 102, lysine 190, arginine 264, lysine 266, tyrosine 268, tyrosine 349, and tyrosine 418 each coordinate substrate.

Belongs to the tryptophan dimethylallyltransferase family.

Its pathway is secondary metabolite biosynthesis. Indole diterpene prenyltransferase; part of the gene cluster that mediates the biosynthesis of paxilline, a mycotoxin that acts as an inhibitor of mammalian maxi-K channels. PaxG, the geranylgeranyl diphosphate (GGPP) synthase is proposed to catalyze the first step in paxilline biosynthesis. Condensation of indole-3-glycerol phosphate with GGPP by paxC then forms 3-geranylgeranylindole (3-GGI), followed by epoxidation and cyclization of this intermediate (by paxM and paxB) to form paspaline. Paspaline is subsequently converted to 13-desoxypaxilline by paxP, the latter being then converted to paxilline by paxQ. Finally paxilline can be mono- and di-prenylated by paxD. This chain is Indole diterpene prenyltransferase paxD, found in Penicillium paxilli.